A 379-amino-acid polypeptide reads, in one-letter code: Dual-specificity RNA methyltransferase RlmN (379 aa).

The active-site Proton acceptor is the E95. Positions 101–345 (EETRGTLCVS…TTVRKTRGDD (245 aa)) constitute a Radical SAM core domain. Cysteines 108 and 350 form a disulfide. The [4Fe-4S] cluster site is built by C115, C119, and C122. S-adenosyl-L-methionine is bound by residues 176–177 (GE), S208, 230–232 (SLH), and N307. C350 acts as the S-methylcysteine intermediate in catalysis.

Belongs to the radical SAM superfamily. RlmN family. Requires [4Fe-4S] cluster as cofactor.

The protein resides in the cytoplasm. The catalysed reaction is adenosine(2503) in 23S rRNA + 2 reduced [2Fe-2S]-[ferredoxin] + 2 S-adenosyl-L-methionine = 2-methyladenosine(2503) in 23S rRNA + 5'-deoxyadenosine + L-methionine + 2 oxidized [2Fe-2S]-[ferredoxin] + S-adenosyl-L-homocysteine. It carries out the reaction adenosine(37) in tRNA + 2 reduced [2Fe-2S]-[ferredoxin] + 2 S-adenosyl-L-methionine = 2-methyladenosine(37) in tRNA + 5'-deoxyadenosine + L-methionine + 2 oxidized [2Fe-2S]-[ferredoxin] + S-adenosyl-L-homocysteine. Functionally, specifically methylates position 2 of adenine 2503 in 23S rRNA and position 2 of adenine 37 in tRNAs. m2A2503 modification seems to play a crucial role in the proofreading step occurring at the peptidyl transferase center and thus would serve to optimize ribosomal fidelity. This Burkholderia vietnamiensis (strain G4 / LMG 22486) (Burkholderia cepacia (strain R1808)) protein is Dual-specificity RNA methyltransferase RlmN.